The primary structure comprises 68 residues: Conotoxin tx3b (68 aa).

Positions 1-19 (MSKLGALLTICLLLFSLTA) are cleaved as a signal peptide. Positions 20–52 (VPLDGDQHADQPAQRLQDRIPTEDHPLFDPNKR) are excised as a propeptide. 3 disulfide bridges follow: Cys-53/Cys-67, Cys-54/Cys-63, and Cys-59/Cys-66. Position 61 is a methionine sulfoxide; partial (Met-61). Cysteine amide is present on Cys-67.

In terms of tissue distribution, expressed by the venom duct.

It localises to the secreted. Its function is as follows. Intracranial injection into mice causes scratching, hyperactivity and circular motion. This is Conotoxin tx3b from Conus textile (Cloth-of-gold cone).